We begin with the raw amino-acid sequence, 669 residues long: Putative transcription factor SOX-14 (669 aa).

Positions 1–12 (MIAKPNQATTEP) are enriched in polar residues. Disordered stretches follow at residues 1 to 149 (MIAK…EMTL), 254 to 336 (YKYR…PKYE), and 419 to 439 (SSLTQSQHNQSDPTAGLMDNI). A compositionally biased stretch (low complexity) spans 17-37 (RPGTVPTVPATTPARPATITI). Pro residues predominate over residues 52 to 71 (TLPPFSPSPSPASSPSPAPA). The span at 75–84 (GAQKTQSQAA) shows a compositional bias: polar residues. Residues 88–105 (PAAVASPSAPVAAAAPKT) are compositionally biased toward low complexity. Positions 130–145 (RESEMDGERSPSHSGH) are enriched in basic and acidic residues. A DNA-binding region (HMG box) is located at residues 187 to 255 (IKRPMNAFMV…LHMIEYPNYK (69 aa)). The segment covering 284 to 294 (TTNNNNSLTTL) has biased composition (low complexity). Residues 295-318 (AINGTTTAGRKSKRSTSTCQSGSA) show a composition bias toward polar residues. The segment covering 322 to 336 (LRNDSGDTSSKPKYE) has biased composition (basic and acidic residues). Residues 419–431 (SSLTQSQHNQSDP) are compositionally biased toward polar residues.

The protein localises to the nucleus. In Drosophila melanogaster (Fruit fly), this protein is Putative transcription factor SOX-14 (Sox14).